Here is a 331-residue protein sequence, read N- to C-terminus: Biotin synthase (331 aa).

Residues 39-264 (SELQTCYLIS…VFPRSMVRLA (226 aa)) form the Radical SAM core domain. 3 residues coordinate [4Fe-4S] cluster: Cys54, Cys58, and Cys61. Positions 98, 130, 190, and 262 each coordinate [2Fe-2S] cluster.

Belongs to the radical SAM superfamily. Biotin synthase family. As to quaternary structure, homodimer. It depends on [4Fe-4S] cluster as a cofactor. [2Fe-2S] cluster serves as cofactor.

It catalyses the reaction (4R,5S)-dethiobiotin + (sulfur carrier)-SH + 2 reduced [2Fe-2S]-[ferredoxin] + 2 S-adenosyl-L-methionine = (sulfur carrier)-H + biotin + 2 5'-deoxyadenosine + 2 L-methionine + 2 oxidized [2Fe-2S]-[ferredoxin]. It functions in the pathway cofactor biosynthesis; biotin biosynthesis; biotin from 7,8-diaminononanoate: step 2/2. Its function is as follows. Catalyzes the conversion of dethiobiotin (DTB) to biotin by the insertion of a sulfur atom into dethiobiotin via a radical-based mechanism. This is Biotin synthase from Chlamydia pneumoniae (Chlamydophila pneumoniae).